The chain runs to 292 residues: MIRIGTRGSKLALYQANKVAELLKNLGYKVEIKIIKTTGDRVLDKKLSDIGIGVFTKELDLAMLNNEIDIAVHSLKDIPTIWNENLMVGAVLERDSYHDLLIWNKDIDFNEDSKIVIGTSSMRRRAFLKFIYPNAKFELLRGNVDTRLRKLKEGLYDAIVLSEAGIIRLGVSLEDFNYKRLDILPAPAQGIIAVACKRDDEEMKSILKEINHERTYLESLCERTALNEFGGGCSVPFGALAVYDEKNELLKLKAAVVTNDELKNASGEVKCKIDEIDKAVELGKKIGLKLKN.

Cys233 carries the S-(dipyrrolylmethanemethyl)cysteine modification.

This sequence belongs to the HMBS family. Dipyrromethane is required as a cofactor.

The enzyme catalyses 4 porphobilinogen + H2O = hydroxymethylbilane + 4 NH4(+). Its pathway is porphyrin-containing compound metabolism; protoporphyrin-IX biosynthesis; coproporphyrinogen-III from 5-aminolevulinate: step 2/4. In terms of biological role, tetrapolymerization of the monopyrrole PBG into the hydroxymethylbilane pre-uroporphyrinogen in several discrete steps. This is Probable porphobilinogen deaminase (hemC) from Methanocaldococcus jannaschii (strain ATCC 43067 / DSM 2661 / JAL-1 / JCM 10045 / NBRC 100440) (Methanococcus jannaschii).